We begin with the raw amino-acid sequence, 459 residues long: Argininosuccinate lyase (459 aa).

It belongs to the lyase 1 family. Argininosuccinate lyase subfamily.

It is found in the cytoplasm. It catalyses the reaction 2-(N(omega)-L-arginino)succinate = fumarate + L-arginine. It functions in the pathway amino-acid biosynthesis; L-arginine biosynthesis; L-arginine from L-ornithine and carbamoyl phosphate: step 3/3. This is Argininosuccinate lyase from Staphylococcus aureus (strain USA300).